The chain runs to 353 residues: Melanin-concentrating hormone receptor 1 (353 aa).

The tract at residues Met-1–Ser-29 is disordered. At Met-1–Pro-44 the chain is on the extracellular side. A compositionally biased stretch (polar residues) spans Pro-12–Ser-29. Residues Asn-13, Asn-16, and Asn-23 are each glycosylated (N-linked (GlcNAc...) asparagine). Residues Ser-45–Lys-67 form a helical membrane-spanning segment. The Cytoplasmic segment spans residues Lys-68–Asp-79. The helical transmembrane segment at Ile-80–Gln-102 threads the bilayer. The Extracellular segment spans residues Leu-103 to Cys-116. Cysteines 116 and 194 form a disulfide. The chain crosses the membrane as a helical span at residues Thr-117–Ile-139. Topologically, residues Asp-140–Ser-158 are cytoplasmic. A helical membrane pass occupies residues Val-159–Tyr-181. The Extracellular portion of the chain corresponds to Ala-182–Thr-209. The helical transmembrane segment at Leu-210 to Leu-232 threads the bilayer. The Cytoplasmic segment spans residues Gln-233–Lys-252. A helical transmembrane segment spans residues Arg-253–Leu-275. Over Gln-276–Phe-289 the chain is Extracellular. Residues Val-290 to Ile-312 form a helical membrane-spanning segment. Topologically, residues Val-313–Thr-353 are cytoplasmic.

The protein belongs to the G-protein coupled receptor 1 family. In terms of assembly, interacts with NCDN. In terms of tissue distribution, highest level in brain, particularly in the frontal cortex and hypothalamus, lower levels in the liver and heart.

The protein resides in the cell membrane. Receptor for melanin-concentrating hormone, coupled to both G proteins that inhibit adenylyl cyclase and G proteins that activate phosphoinositide hydrolysis. The sequence is that of Melanin-concentrating hormone receptor 1 from Homo sapiens (Human).